The following is a 404-amino-acid chain: Acetate kinase (404 aa).

Asparagine 7 provides a ligand contact to Mg(2+). Lysine 14 contacts ATP. Substrate is bound at residue arginine 91. Catalysis depends on aspartate 148, which acts as the Proton donor/acceptor. ATP contacts are provided by residues 208-212 (HLGNG) and 283-285 (DLR). A Mg(2+)-binding site is contributed by glutamate 388.

The protein belongs to the acetokinase family. In terms of assembly, homodimer. Requires Mg(2+) as cofactor. It depends on Mn(2+) as a cofactor.

The protein localises to the cytoplasm. The catalysed reaction is acetate + ATP = acetyl phosphate + ADP. It participates in metabolic intermediate biosynthesis; acetyl-CoA biosynthesis; acetyl-CoA from acetate: step 1/2. In terms of biological role, catalyzes the formation of acetyl phosphate from acetate and ATP. Can also catalyze the reverse reaction. The polypeptide is Acetate kinase (Borrelia turicatae (strain 91E135)).